The primary structure comprises 747 residues: RNA polymerase II assembly factor rtp1 (747 aa).

7 HEAT repeats span residues 37 to 75, 103 to 141, 320 to 358, 381 to 418, 459 to 485, 486 to 523, and 557 to 594; these read NYFLNLLEEISKLDTDQPLSVTSLRCLQLFVHLTFLLGV, QIYNILLPLLLTPSLLQGPLNLHYADLLLLHLYLLNCHE, DIIRICESCVPSLLHLQENTTLRSKVQDILLRIISVCGT, SQLAMFLPNLLEIWVQQPPDKRLELLELVQYALSNVDS, EENEEILLVLLNIISSVIGRNAELDLE, NPISSLLPALEQLSNYSNREISDLAKDVYKTLIQSKDD, and INPVRVLHVLINLLRDENSYVHLNVISAVVSLCDKYDD.

This sequence belongs to the Tango6 family. As to quaternary structure, interacts with RNA polymerase II subunits. Interacts with nuclear pore complex subunits.

It localises to the cytoplasm. It is found in the nucleus. In terms of biological role, required for the cytoplasmic assembly and the nuclear import of RNA polymerase II. This Schizosaccharomyces pombe (strain 972 / ATCC 24843) (Fission yeast) protein is RNA polymerase II assembly factor rtp1.